The chain runs to 101 residues: Small ribosomal subunit protein uS14 (101 aa).

The protein belongs to the universal ribosomal protein uS14 family. In terms of assembly, part of the 30S ribosomal subunit. Contacts proteins S3 and S10.

Its function is as follows. Binds 16S rRNA, required for the assembly of 30S particles and may also be responsible for determining the conformation of the 16S rRNA at the A site. This Methylococcus capsulatus (strain ATCC 33009 / NCIMB 11132 / Bath) protein is Small ribosomal subunit protein uS14.